The sequence spans 353 residues: Holliday junction branch migration complex subunit RuvB (353 aa).

The tract at residues 1 to 183 is large ATPase domain (RuvB-L); sequence MNEPRIVAPQ…FGATYRLDFY (183 aa). Residues leucine 22, arginine 23, glycine 64, lysine 67, threonine 68, threonine 69, 130 to 132, arginine 173, tyrosine 183, and arginine 220 contribute to the ATP site; that span reads EDF. Threonine 68 lines the Mg(2+) pocket. The interval 184–254 is small ATPAse domain (RuvB-S); sequence DTAALRAIVE…LARLALDQLA (71 aa). Residues 257 to 353 form a head domain (RuvB-H) region; it reads ELGLDEVDRL…HAASERSSDA (97 aa). DNA is bound by residues arginine 312 and arginine 317.

Belongs to the RuvB family. As to quaternary structure, homohexamer. Forms an RuvA(8)-RuvB(12)-Holliday junction (HJ) complex. HJ DNA is sandwiched between 2 RuvA tetramers; dsDNA enters through RuvA and exits via RuvB. An RuvB hexamer assembles on each DNA strand where it exits the tetramer. Each RuvB hexamer is contacted by two RuvA subunits (via domain III) on 2 adjacent RuvB subunits; this complex drives branch migration. In the full resolvosome a probable DNA-RuvA(4)-RuvB(12)-RuvC(2) complex forms which resolves the HJ.

It is found in the cytoplasm. The catalysed reaction is ATP + H2O = ADP + phosphate + H(+). The RuvA-RuvB-RuvC complex processes Holliday junction (HJ) DNA during genetic recombination and DNA repair, while the RuvA-RuvB complex plays an important role in the rescue of blocked DNA replication forks via replication fork reversal (RFR). RuvA specifically binds to HJ cruciform DNA, conferring on it an open structure. The RuvB hexamer acts as an ATP-dependent pump, pulling dsDNA into and through the RuvAB complex. RuvB forms 2 homohexamers on either side of HJ DNA bound by 1 or 2 RuvA tetramers; 4 subunits per hexamer contact DNA at a time. Coordinated motions by a converter formed by DNA-disengaged RuvB subunits stimulates ATP hydrolysis and nucleotide exchange. Immobilization of the converter enables RuvB to convert the ATP-contained energy into a lever motion, pulling 2 nucleotides of DNA out of the RuvA tetramer per ATP hydrolyzed, thus driving DNA branch migration. The RuvB motors rotate together with the DNA substrate, which together with the progressing nucleotide cycle form the mechanistic basis for DNA recombination by continuous HJ branch migration. Branch migration allows RuvC to scan DNA until it finds its consensus sequence, where it cleaves and resolves cruciform DNA. The sequence is that of Holliday junction branch migration complex subunit RuvB from Thermomicrobium roseum (strain ATCC 27502 / DSM 5159 / P-2).